The following is a 354-amino-acid chain: Protein RecA (354 aa).

78–85 provides a ligand contact to ATP; sequence GPESSGKT.

It belongs to the RecA family.

It localises to the cytoplasm. Functionally, can catalyze the hydrolysis of ATP in the presence of single-stranded DNA, the ATP-dependent uptake of single-stranded DNA by duplex DNA, and the ATP-dependent hybridization of homologous single-stranded DNAs. It interacts with LexA causing its activation and leading to its autocatalytic cleavage. This chain is Protein RecA, found in Zymomonas mobilis subsp. mobilis (strain ATCC 31821 / ZM4 / CP4).